The primary structure comprises 140 residues: Large-conductance mechanosensitive channel (140 aa).

Helical transmembrane passes span 7 to 27 (EFAF…GAAF), 30 to 50 (IITS…FGTV), and 64 to 84 (GLFV…FLFV).

It belongs to the MscL family. In terms of assembly, homopentamer.

The protein localises to the cell membrane. Channel that opens in response to stretch forces in the membrane lipid bilayer. May participate in the regulation of osmotic pressure changes within the cell. This is Large-conductance mechanosensitive channel from Staphylococcus carnosus (strain TM300).